The sequence spans 332 residues: Ribosomal RNA small subunit methyltransferase C (332 aa).

It belongs to the methyltransferase superfamily. RsmC family. Monomer.

It is found in the cytoplasm. It carries out the reaction guanosine(1207) in 16S rRNA + S-adenosyl-L-methionine = N(2)-methylguanosine(1207) in 16S rRNA + S-adenosyl-L-homocysteine + H(+). In terms of biological role, specifically methylates the guanine in position 1207 of 16S rRNA in the 30S particle. The sequence is that of Ribosomal RNA small subunit methyltransferase C from Pseudomonas fluorescens (strain ATCC BAA-477 / NRRL B-23932 / Pf-5).